Consider the following 143-residue polypeptide: Large ribosomal subunit protein uL11 (143 aa).

It belongs to the universal ribosomal protein uL11 family. As to quaternary structure, part of the ribosomal stalk of the 50S ribosomal subunit. Interacts with L10 and the large rRNA to form the base of the stalk. L10 forms an elongated spine to which L12 dimers bind in a sequential fashion forming a multimeric L10(L12)X complex. One or more lysine residues are methylated.

Functionally, forms part of the ribosomal stalk which helps the ribosome interact with GTP-bound translation factors. The sequence is that of Large ribosomal subunit protein uL11 from Kineococcus radiotolerans (strain ATCC BAA-149 / DSM 14245 / SRS30216).